The following is a 1398-amino-acid chain: DNA-directed RNA polymerase subunit beta' (1398 aa).

Zn(2+) is bound by residues Cys71, Cys73, Cys86, and Cys89. Residues Asp462, Asp464, and Asp466 each contribute to the Mg(2+) site. Positions 810, 883, 890, and 893 each coordinate Zn(2+). Residues 1377-1398 form a disordered region; it reads EKQAAVVSPAPEAELPALPPAE. Residues 1380–1392 are compositionally biased toward low complexity; sequence AAVVSPAPEAELP.

The protein belongs to the RNA polymerase beta' chain family. As to quaternary structure, the RNAP catalytic core consists of 2 alpha, 1 beta, 1 beta' and 1 omega subunit. When a sigma factor is associated with the core the holoenzyme is formed, which can initiate transcription. Mg(2+) is required as a cofactor. It depends on Zn(2+) as a cofactor.

It catalyses the reaction RNA(n) + a ribonucleoside 5'-triphosphate = RNA(n+1) + diphosphate. DNA-dependent RNA polymerase catalyzes the transcription of DNA into RNA using the four ribonucleoside triphosphates as substrates. The polypeptide is DNA-directed RNA polymerase subunit beta' (Bradyrhizobium diazoefficiens (strain JCM 10833 / BCRC 13528 / IAM 13628 / NBRC 14792 / USDA 110)).